A 181-amino-acid polypeptide reads, in one-letter code: Cyclic AMP-dependent transcription factor ATF-3 (181 aa).

Residues 73–97 (EMSVTKSEAAPEEDERKRRRRERNK) are disordered. Residue Lys-78 forms a Glycyl lysine isopeptide (Lys-Gly) (interchain with G-Cter in SUMO2) linkage. The bZIP domain maps to 86–149 (DERKRRRRER…QHLIYMLNLH (64 aa)). The tract at residues 88-110 (RKRRRRERNKIAAAKCRNKKKEK) is basic motif. Residues 114 to 142 (LQKESEKLESVNAELKAQIEELKNEKQHL) form a leucine-zipper region. Thr-162 is modified (phosphothreonine). Lys-175 participates in a covalent cross-link: Glycyl lysine isopeptide (Lys-Gly) (interchain with G-Cter in SUMO2).

The protein belongs to the bZIP family. ATF subfamily. In terms of assembly, binds DNA as a homodimer or a heterodimer. Interacts with KAT5; promoting KAT5 autoacetylation and KAT5 deubiquitination by USP7.

The protein resides in the nucleus. This protein binds the cAMP response element (CRE) (consensus: 5'-GTGACGT[AC][AG]-3'), a sequence present in many viral and cellular promoters. Represses transcription from promoters with ATF sites. It may repress transcription by stabilizing the binding of inhibitory cofactors at the promoter. The polypeptide is Cyclic AMP-dependent transcription factor ATF-3 (Mus musculus (Mouse)).